A 342-amino-acid polypeptide reads, in one-letter code: UDP-N-acetylglucosamine--N-acetylmuramyl-(pentapeptide) pyrophosphoryl-undecaprenol N-acetylglucosamine transferase (342 aa).

Residues 10–12, Asn-124, Ser-177, and Gln-275 each bind UDP-N-acetyl-alpha-D-glucosamine; that span reads TGG.

It belongs to the glycosyltransferase 28 family. MurG subfamily.

The protein localises to the cell inner membrane. It carries out the reaction di-trans,octa-cis-undecaprenyl diphospho-N-acetyl-alpha-D-muramoyl-L-alanyl-D-glutamyl-meso-2,6-diaminopimeloyl-D-alanyl-D-alanine + UDP-N-acetyl-alpha-D-glucosamine = di-trans,octa-cis-undecaprenyl diphospho-[N-acetyl-alpha-D-glucosaminyl-(1-&gt;4)]-N-acetyl-alpha-D-muramoyl-L-alanyl-D-glutamyl-meso-2,6-diaminopimeloyl-D-alanyl-D-alanine + UDP + H(+). It functions in the pathway cell wall biogenesis; peptidoglycan biosynthesis. Functionally, cell wall formation. Catalyzes the transfer of a GlcNAc subunit on undecaprenyl-pyrophosphoryl-MurNAc-pentapeptide (lipid intermediate I) to form undecaprenyl-pyrophosphoryl-MurNAc-(pentapeptide)GlcNAc (lipid intermediate II). The chain is UDP-N-acetylglucosamine--N-acetylmuramyl-(pentapeptide) pyrophosphoryl-undecaprenol N-acetylglucosamine transferase from Campylobacter jejuni subsp. jejuni serotype O:6 (strain 81116 / NCTC 11828).